The sequence spans 170 residues: Small ribosomal subunit protein uS4 (170 aa).

In terms of domain architecture, S4 RNA-binding spans 100 to 164 (RRLQTVVYRE…SDLTDELHPA (65 aa)).

It belongs to the universal ribosomal protein uS4 family. Part of the 30S ribosomal subunit. Contacts protein S5. The interaction surface between S4 and S5 is involved in control of translational fidelity.

Functionally, one of the primary rRNA binding proteins, it binds directly to 16S rRNA where it nucleates assembly of the body of the 30S subunit. In terms of biological role, with S5 and S12 plays an important role in translational accuracy. The sequence is that of Small ribosomal subunit protein uS4 from Halobacterium salinarum (strain ATCC 29341 / DSM 671 / R1).